The sequence spans 243 residues: Hydroxyacylglutathione hydrolase (243 aa).

Zn(2+)-binding residues include His-59, His-61, Asp-63, His-64, His-117, Asp-135, and His-173.

The protein belongs to the metallo-beta-lactamase superfamily. Glyoxalase II family. In terms of assembly, monomer. Zn(2+) is required as a cofactor.

It carries out the reaction an S-(2-hydroxyacyl)glutathione + H2O = a 2-hydroxy carboxylate + glutathione + H(+). Its pathway is secondary metabolite metabolism; methylglyoxal degradation; (R)-lactate from methylglyoxal: step 2/2. Its function is as follows. Thiolesterase that catalyzes the hydrolysis of S-D-lactoyl-glutathione to form glutathione and D-lactic acid. This Acidiphilium cryptum (strain JF-5) protein is Hydroxyacylglutathione hydrolase.